The sequence spans 226 residues: MAAMRWRWWQRLLPWRLLQARGFPQNSAPSLGLGARTYSQGDCSYSRTALYDLLGVPSTATQAQIKAAYYRQCFLYHPDRNSGSAEAAERFTRISQAYVVLGSATLRRKYDRGLLSDEDLRGPGVRPSRTPAPDPGSPRTPPPTSRTHDGSRASPGANRTMFNFDAFYQAHYGEQLERERRLRARREALRKRQEYRSMKGLRWEDTRDTAAIFLIFSIFIIIGFYI.

The transit peptide at 1 to 38 (MAAMRWRWWQRLLPWRLLQARGFPQNSAPSLGLGARTY) directs the protein to the mitochondrion. The J domain maps to 49 to 114 (ALYDLLGVPS…TLRRKYDRGL (66 aa)). Residues 116-157 (SDEDLRGPGVRPSRTPAPDPGSPRTPPPTSRTHDGSRASPGA) form a disordered region. A compositionally biased stretch (pro residues) spans 130 to 144 (TPAPDPGSPRTPPPT). Residues 208 to 225 (DTAAIFLIFSIFIIIGFY) traverse the membrane as a helical segment.

As to quaternary structure, associates with the ATP synthase complex. Interacts with MT-ATP6; interaction is direct. Interacts with ATP5MC2; interaction is direct. In terms of tissue distribution, expressed in brain, heart, kidney, liver, lung, spleen, stomach and testis. Highly expressed in the brain. In the neocortex, expressed in most, if not all, glutamatergic excitatory projection neurons (pyramidal) and many interneurons, with the strongest signal noticeably in large pyramidal neurons of layer 3C. Also present in pyramidal neurons of layer 3C PNs of the superior temporal cortex, as well as in pyramidal neurons (Betz cells) of the layer 5B primary motor cortex (at protein level).

It localises to the mitochondrion inner membrane. Its function is as follows. Mitochondrial protein enriched in neurons that acts as a regulator of mitochondrial respiration. Associates with the ATP synthase complex and facilitates ATP synthesis. May be a chaperone protein involved in the turnover of the subunits of mitochondrial complex I N-module. It facilitates the degradation of N-module subunits damaged by oxidative stress, and contributes to complex I functional efficiency. In Homo sapiens (Human), this protein is DnaJ homolog subfamily C member 30, mitochondrial.